A 612-amino-acid polypeptide reads, in one-letter code: Zinc metalloproteinase-disintegrin-like 8 (612 aa).

A signal peptide spans 1–20 (MIQVLLVTICLAVFPYQGSS). Residues 21–189 (IILGSGNVND…KKASQLNLTP (169 aa)) constitute a propeptide that is removed on maturation. Positions 199-395 (KYIELVIVAD…NRPPCILNKP (197 aa)) constitute a Peptidase M12B domain. E202 lines the Ca(2+) pocket. An N-linked (GlcNAc...) asparagine glycan is attached at N218. D286 serves as a coordination point for Ca(2+). Intrachain disulfides connect C310-C390, C350-C374, and C352-C357. H335 contributes to the Zn(2+) binding site. E336 is a catalytic residue. Positions 339 and 345 each coordinate Zn(2+). Ca(2+) is bound by residues C390, N393, V405, N408, F410, E412, E415, and D418. Residues 403–489 (PPVCGNYFVE…DCPTDDFQRN (87 aa)) enclose the Disintegrin domain. Cystine bridges form between C406–C435, C417–C430, C419–C425, C429–C452, C443–C449, C448–C474, C461–C481, C468–C500, C493–C505, C512–C562, C527–C573, C540–C550, C557–C599, and C593–C605. A D/ECD-tripeptide motif is present at residues 467-469 (ECD). N502 carries N-linked (GlcNAc...) asparagine glycosylation.

Belongs to the venom metalloproteinase (M12B) family. P-III subfamily. The cofactor is Zn(2+). Expressed by the venom gland.

The protein resides in the secreted. In terms of biological role, snake venom metalloproteinase that impairs hemostasis in the envenomed animal. This chain is Zinc metalloproteinase-disintegrin-like 8, found in Crotalus adamanteus (Eastern diamondback rattlesnake).